The following is a 271-amino-acid chain: Cartilage-associated protein (271 aa).

The N-terminal stretch at M1–A15 is a signal peptide. N-linked (GlcNAc...) asparagine glycosylation occurs at N76.

The protein belongs to the leprecan family. Found in articular chondrocytes. Expressed in a variety of tissues.

The protein resides in the secreted. The protein localises to the extracellular space. Its subcellular location is the extracellular matrix. In terms of biological role, necessary for efficient 3-hydroxylation of fibrillar collagen prolyl residues. The sequence is that of Cartilage-associated protein (CRTAP) from Gallus gallus (Chicken).